A 512-amino-acid polypeptide reads, in one-letter code: Rab11 family-interacting protein 2 (512 aa).

Residues 1-120 (MMLSEQAQKW…DKQRRKTEWF (120 aa)) enclose the C2 domain. The necessary for its cellular translocation to the plasma membrane stretch occupies residues 15–102 (VQVTVLQAKD…GLDKFLGQVA (88 aa)). Disordered regions lie at residues 169 to 239 (DKMK…MSSE) and 262 to 285 (VPES…KMNQ). Residues 178-188 (GTFSDTSSAII) are compositionally biased toward polar residues. Over residues 226-236 (HSMSDLSGSHM) the composition is skewed to low complexity. S227 is modified (phosphoserine; by MARK2). S277 carries the post-translational modification Phosphoserine. An NPF 1 motif is present at residues 323 to 325 (NPF). Residues 361–374 (ERVTGKKDSRRSDK) are compositionally biased toward basic and acidic residues. Residues 361–392 (ERVTGKKDSRRSDKLNNGGSDSPCDLKSPNAF) form a disordered region. 2 consecutive short sequence motifs (NPF) follow at residues 406–408 (NPF) and 440–442 (NPF). Positions 437-499 (PDSNPFDATA…EETPSILRVP (63 aa)) constitute an FIP-RBD domain. Positions 465 to 512 (ELLRRKDTHIRELEDYIDNLLVRVMEETPSILRVPYEPSRKAGKFSNS) are necessary for interaction with AP2A1, RAB11A, subcellular location, endocytosis activity and homooligomerization.

In terms of assembly, homooligomerizes in a Rab11-independent manner. Forms a heterooligomeric complex with RAB11FIP4. Interacts with AP2A1, MYO5B, RAB25 and REPS1. Interacts with RAB11A and RAB11B (activated GTP-bound form). Interacts with NPC1L1. Interacts (via NPF motifs) with EHD1 and EHD3. Interacts with TICAM2; this interaction directs RAB11FIP2 to the phagosome. Interacts with RAB14 and RAB25 (GTP-bound forms). Post-translationally, phosphorylation at Ser-227 by MARK2 regulates epithelial cell polarity.

The protein resides in the cell projection. The protein localises to the phagocytic cup. Its subcellular location is the cell membrane. It is found in the recycling endosome membrane. A Rab11 effector binding preferentially phosphatidylinositol 3,4,5-trisphosphate (PtdInsP3) and phosphatidic acid (PA) and acting in the regulation of the transport of vesicles from the endosomal recycling compartment (ERC) to the plasma membrane. Involved in insulin granule exocytosis. Also involved in receptor-mediated endocytosis and membrane trafficking of recycling endosomes, probably originating from clathrin-coated vesicles. Required in a complex with MYO5B and RAB11 for the transport of NPC1L1 to the plasma membrane. Also acts as a regulator of cell polarity. Plays an essential role in phagocytosis through a mechanism involving TICAM2, RAC1 and CDC42 Rho GTPases for controlling actin-dynamics. This chain is Rab11 family-interacting protein 2 (RAB11FIP2), found in Homo sapiens (Human).